Consider the following 269-residue polypeptide: Type II restriction enzyme SfiI (269 aa).

The enzyme catalyses Endonucleolytic cleavage of DNA to give specific double-stranded fragments with terminal 5'-phosphates.. Functionally, an F and P subtype restriction enzyme that recognizes the double-stranded sequence 5'-GGCCN(5)GGCC-3' and cleaves before N-9. The chain is Type II restriction enzyme SfiI (sfiIR) from Streptomyces fimbriatus.